The primary structure comprises 310 residues: Glutaminase (310 aa).

Substrate is bound by residues S67, N118, E161, N168, Y192, Y244, and V262.

It belongs to the glutaminase family. Homotetramer.

The catalysed reaction is L-glutamine + H2O = L-glutamate + NH4(+). The chain is Glutaminase from Legionella pneumophila (strain Paris).